The primary structure comprises 594 residues: Probable translation initiation factor IF-2 (594 aa).

The tr-type G domain maps to 5 to 224; the sequence is YRAPIVVVVG…LMAGLTQRLV (220 aa). Residues 14 to 21 form a G1 region; it reads GHVDVGKT. 14–21 provides a ligand contact to GTP; it reads GHVDVGKT. The interval 39–43 is G2; sequence MITQH. The G3 stretch occupies residues 80–83; sequence DTPG. GTP-binding positions include 80 to 84 and 134 to 137; these read DTPGH and NKVD. Residues 134-137 are G4; that stretch reads NKVD. The tract at residues 202–204 is G5; it reads SAV.

This sequence belongs to the TRAFAC class translation factor GTPase superfamily. Classic translation factor GTPase family. IF-2 subfamily.

Function in general translation initiation by promoting the binding of the formylmethionine-tRNA to ribosomes. Seems to function along with eIF-2. In Caldivirga maquilingensis (strain ATCC 700844 / DSM 13496 / JCM 10307 / IC-167), this protein is Probable translation initiation factor IF-2.